Consider the following 252-residue polypeptide: Ubiquinone biosynthesis O-methyltransferase (252 aa).

The S-adenosyl-L-methionine site is built by Arg-41, Gly-72, Asp-93, and Met-136.

Belongs to the methyltransferase superfamily. UbiG/COQ3 family.

It catalyses the reaction a 3-demethylubiquinol + S-adenosyl-L-methionine = a ubiquinol + S-adenosyl-L-homocysteine + H(+). The enzyme catalyses a 3-(all-trans-polyprenyl)benzene-1,2-diol + S-adenosyl-L-methionine = a 2-methoxy-6-(all-trans-polyprenyl)phenol + S-adenosyl-L-homocysteine + H(+). Its pathway is cofactor biosynthesis; ubiquinone biosynthesis. In terms of biological role, O-methyltransferase that catalyzes the 2 O-methylation steps in the ubiquinone biosynthetic pathway. This chain is Ubiquinone biosynthesis O-methyltransferase, found in Rhizobium leguminosarum bv. trifolii (strain WSM2304).